The following is a 245-amino-acid chain: Farnesol dehydrogenase (245 aa).

Residues 11–40 and Asp64 each bind NAD(+); that span reads VTGASSGIGAAITTDLAKAGMVVVGLARRV. Ser145 is a substrate binding site. The active-site Proton acceptor is Tyr160. NAD(+) is bound at residue Lys164.

The protein belongs to the short-chain dehydrogenases/reductases (SDR) family. Homodimer. In terms of tissue distribution, highly expressed level in the midgut and brain in adult females, and at lower level in the abdominal and thoracic ganglia. High levels are detected in corpora allata (CA), Malpighian tubules and fat body.

The catalysed reaction is (2E,6E)-farnesol + NADP(+) = (2E,6E)-farnesal + NADPH + H(+). In terms of biological role, mediates oxidation of farnesol into farnesal, a precursor of juvenile hormone in the corpora allata (CA), the glands that synthesize juvenile hormone. Able to oxidize C(10) to C(15) isoprenoid and aliphatic alcohols. The chain is Farnesol dehydrogenase from Aedes aegypti (Yellowfever mosquito).